The chain runs to 702 residues: Cadmium, zinc and cobalt-transporting ATPase (702 aa).

Topologically, residues methionine 1 to tyrosine 86 are cytoplasmic. One can recognise an HMA domain in the interval valine 4–threonine 72. Cd(2+) is bound by residues cysteine 15 and cysteine 18. Positions 15 and 18 each coordinate Co(2+). Zn(2+) is bound by residues cysteine 15 and cysteine 18. The chain crosses the membrane as a helical span at residues arginine 87 to alanine 107. The Extracellular segment spans residues tyrosine 108–glutamate 116. The helical transmembrane segment at phenylalanine 117 to valine 136 threads the bilayer. At lysine 137 to glutamine 143 the chain is on the cytoplasmic side. Residues valine 144 to glutamine 163 traverse the membrane as a helical segment. Over tyrosine 164–glutamate 166 the chain is Extracellular. Residues glycine 167 to serine 186 traverse the membrane as a helical segment. Over arginine 187–proline 320 the chain is Cytoplasmic. A helical membrane pass occupies residues alanine 321–glycine 339. Topologically, residues alanine 340–tryptophan 345 are extracellular. Residues valine 346 to valine 363 traverse the membrane as a helical segment. At serine 364–arginine 648 the chain is on the cytoplasmic side. The 4-aspartylphosphate intermediate role is filled by aspartate 401. Residues aspartate 595 and aspartate 599 each coordinate Mg(2+). A helical membrane pass occupies residues isoleucine 649–phenylalanine 670. Topologically, residues glycine 671–alanine 678 are extracellular. The helical transmembrane segment at valine 679–methionine 694 threads the bilayer. At arginine 695 to lysine 702 the chain is on the cytoplasmic side.

The protein belongs to the cation transport ATPase (P-type) (TC 3.A.3) family. Type IB subfamily.

The protein localises to the cell membrane. It catalyses the reaction Zn(2+)(in) + ATP + H2O = Zn(2+)(out) + ADP + phosphate + H(+). The enzyme catalyses Cd(2+)(in) + ATP + H2O = Cd(2+)(out) + ADP + phosphate + H(+). In terms of biological role, couples the hydrolysis of ATP with the transport of cadmium, zinc and cobalt out of the cell. Does not seem to transport copper. In Bacillus subtilis (strain 168), this protein is Cadmium, zinc and cobalt-transporting ATPase (cadA).